Consider the following 304-residue polypeptide: Ornithine carbamoyltransferase (304 aa).

Residues 47 to 50 (STRT), Arg-98, and 125 to 128 (HPCQ) each bind carbamoyl phosphate. Residues Asn-156, Asp-221, and 225–226 (SM) each bind L-ornithine. Residues 262–263 (CL) and Arg-290 each bind carbamoyl phosphate.

The protein belongs to the aspartate/ornithine carbamoyltransferase superfamily. OTCase family.

The protein localises to the cytoplasm. The catalysed reaction is carbamoyl phosphate + L-ornithine = L-citrulline + phosphate + H(+). Its pathway is amino-acid biosynthesis; L-arginine biosynthesis; L-arginine from L-ornithine and carbamoyl phosphate: step 1/3. Its function is as follows. Reversibly catalyzes the transfer of the carbamoyl group from carbamoyl phosphate (CP) to the N(epsilon) atom of ornithine (ORN) to produce L-citrulline. The chain is Ornithine carbamoyltransferase from Methanococcus maripaludis (strain C7 / ATCC BAA-1331).